The chain runs to 200 residues: Large ribosomal subunit protein uL4 (200 aa).

Positions 43–71 are disordered; that stretch reads RAQKTRAEVSGSGKKPWRQKGTGRARSGD.

It belongs to the universal ribosomal protein uL4 family. In terms of assembly, part of the 50S ribosomal subunit.

Functionally, one of the primary rRNA binding proteins, this protein initially binds near the 5'-end of the 23S rRNA. It is important during the early stages of 50S assembly. It makes multiple contacts with different domains of the 23S rRNA in the assembled 50S subunit and ribosome. Its function is as follows. Forms part of the polypeptide exit tunnel. This Aggregatibacter actinomycetemcomitans (Actinobacillus actinomycetemcomitans) protein is Large ribosomal subunit protein uL4.